The sequence spans 308 residues: ADP-L-glycero-D-manno-heptose-6-epimerase (308 aa).

Residues 10-11 (MI), 31-32 (DN), lysine 38, lysine 53, 75-79 (EGACS), and asparagine 92 contribute to the NADP(+) site. The active-site Proton acceptor is the tyrosine 140. Position 144 (lysine 144) interacts with NADP(+). Residue asparagine 169 coordinates substrate. NADP(+)-binding residues include valine 170 and lysine 178. Lysine 178 acts as the Proton acceptor in catalysis. Residues serine 180, histidine 187, 201 to 204 (FEGS), arginine 209, and tyrosine 272 contribute to the substrate site.

It belongs to the NAD(P)-dependent epimerase/dehydratase family. HldD subfamily. As to quaternary structure, homopentamer. NADP(+) is required as a cofactor.

It catalyses the reaction ADP-D-glycero-beta-D-manno-heptose = ADP-L-glycero-beta-D-manno-heptose. It participates in nucleotide-sugar biosynthesis; ADP-L-glycero-beta-D-manno-heptose biosynthesis; ADP-L-glycero-beta-D-manno-heptose from D-glycero-beta-D-manno-heptose 7-phosphate: step 4/4. Its function is as follows. Catalyzes the interconversion between ADP-D-glycero-beta-D-manno-heptose and ADP-L-glycero-beta-D-manno-heptose via an epimerization at carbon 6 of the heptose. The chain is ADP-L-glycero-D-manno-heptose-6-epimerase from Actinobacillus pleuropneumoniae serotype 7 (strain AP76).